The primary structure comprises 90 residues: MASSRLPASALTLKQFIQRQKVLSLYRNMMRTIRQVPDEGDRKYLRDWARDEFKRNKNSTNQDAIRMMITQANMHHDELQSSLALANVKK.

A mitochondrion-targeting transit peptide spans 1 to 19 (MASSRLPASALTLKQFIQR).

The protein belongs to the complex I LYR family.

It is found in the mitochondrion. Involved in efficient integration of the N-module into mitochondrial respiratory chain complex I. This chain is LYR motif-containing protein 2 (lyrm2), found in Salmo salar (Atlantic salmon).